The primary structure comprises 209 residues: A-type ATP synthase subunit D (209 aa).

The protein belongs to the V-ATPase D subunit family. Has multiple subunits, A(3), B(3), C, D, E, F, G, I and K(x); there may be a few other subunits as well.

It localises to the cell membrane. Functionally, component of the A-type ATP synthase that produces ATP from ADP in the presence of a proton gradient across the membrane. This is A-type ATP synthase subunit D from Methanosarcina mazei (strain ATCC BAA-159 / DSM 3647 / Goe1 / Go1 / JCM 11833 / OCM 88) (Methanosarcina frisia).